The chain runs to 618 residues: tRNA endonuclease vms-1 (618 aa).

A C2H2-type zinc finger spans residues D59–H85. The region spanning R170–V311 is the VLRF1 domain. Q213 is an active-site residue. ANK repeat units follow at residues N437–S466 and G470–E496. The disordered stretch occupies residues A502–K539. Residues H505 to L515 show a composition bias toward basic and acidic residues. Positions K510 to K557 form a coiled coil.

This sequence belongs to the ANKZF1/VMS1 family. In terms of tissue distribution, in larval stages and in adults, expressed in intestinal cells, specific neurons in the head and the tail, and in the ventral nerve cord.

The protein resides in the cytoplasm. It localises to the mitochondrion. Its function is as follows. Endonuclease that cleaves polypeptidyl-tRNAs downstream of the ribosome-associated quality control (RQC) pathway to release incompletely synthesized polypeptides for degradation. The RQC pathway disassembles aberrantly stalled translation complexes to recycle or degrade the constituent parts. Dispensable for viability and growth but is required for protection against oxidative stress and for wild-type life span. The sequence is that of tRNA endonuclease vms-1 (vms-1) from Caenorhabditis elegans.